The following is a 475-amino-acid chain: Ribulose bisphosphate carboxylase large chain (475 aa).

A propeptide spanning residues 1 to 2 (MS) is cleaved from the precursor. Pro-3 is modified (N-acetylproline). Lys-14 is subject to N6,N6,N6-trimethyllysine. Residues Asn-123 and Thr-173 each contribute to the substrate site. Residue Lys-175 is the Proton acceptor of the active site. Lys-177 contacts substrate. Mg(2+) is bound by residues Lys-201, Asp-203, and Glu-204. Position 201 is an N6-carboxylysine (Lys-201). His-294 serves as the catalytic Proton acceptor. Substrate contacts are provided by Arg-295, His-327, and Ser-379.

The protein belongs to the RuBisCO large chain family. Type I subfamily. In terms of assembly, heterohexadecamer of 8 large chains and 8 small chains. Requires Mg(2+) as cofactor.

The protein localises to the plastid. The protein resides in the chloroplast. It carries out the reaction 2 (2R)-3-phosphoglycerate + 2 H(+) = D-ribulose 1,5-bisphosphate + CO2 + H2O. The enzyme catalyses D-ribulose 1,5-bisphosphate + O2 = 2-phosphoglycolate + (2R)-3-phosphoglycerate + 2 H(+). In terms of biological role, ruBisCO catalyzes two reactions: the carboxylation of D-ribulose 1,5-bisphosphate, the primary event in carbon dioxide fixation, as well as the oxidative fragmentation of the pentose substrate in the photorespiration process. Both reactions occur simultaneously and in competition at the same active site. The chain is Ribulose bisphosphate carboxylase large chain from Huperzia lucidula (Shining clubmoss).